The chain runs to 224 residues: tRNA (guanine-N(7)-)-methyltransferase (224 aa).

S-adenosyl-L-methionine contacts are provided by glutamate 54, glutamate 79, and aspartate 129. Residue aspartate 129 is part of the active site. Residues lysine 133 and aspartate 165 each contribute to the substrate site.

The protein belongs to the class I-like SAM-binding methyltransferase superfamily. TrmB family.

It catalyses the reaction guanosine(46) in tRNA + S-adenosyl-L-methionine = N(7)-methylguanosine(46) in tRNA + S-adenosyl-L-homocysteine. The protein operates within tRNA modification; N(7)-methylguanine-tRNA biosynthesis. Catalyzes the formation of N(7)-methylguanine at position 46 (m7G46) in tRNA. The chain is tRNA (guanine-N(7)-)-methyltransferase from Chlamydia pneumoniae (Chlamydophila pneumoniae).